The sequence spans 525 residues: Lysine--tRNA ligase (525 aa).

2 residues coordinate Mg(2+): glutamate 419 and glutamate 426.

The protein belongs to the class-II aminoacyl-tRNA synthetase family. Homodimer. Mg(2+) is required as a cofactor.

It is found in the cytoplasm. The enzyme catalyses tRNA(Lys) + L-lysine + ATP = L-lysyl-tRNA(Lys) + AMP + diphosphate. The chain is Lysine--tRNA ligase (lysS) from Deinococcus radiodurans (strain ATCC 13939 / DSM 20539 / JCM 16871 / CCUG 27074 / LMG 4051 / NBRC 15346 / NCIMB 9279 / VKM B-1422 / R1).